The following is a 243-amino-acid chain: HTH-type transcriptional regulator MlrA (243 aa).

Positions 3 to 72 constitute an HTH merR-type domain; it reads LYTIGEVALL…VSKVKVLLSS (70 aa). The segment at residues 6–25 is a DNA-binding region (H-T-H motif); that stretch reads IGEVALLCDINPVTLRAWQR.

In terms of biological role, transcriptional activator of csgD, which is required for production of the curli (AgF). This is HTH-type transcriptional regulator MlrA from Salmonella typhimurium (strain SL1344).